A 225-amino-acid chain; its full sequence is Probable CDP-diacylglycerol--inositol 3-phosphatidyltransferase 2 (225 aa).

Helical transmembrane passes span 6–26 (PATLSVYLYIPNIVGYMRVLL) and 29–49 (IAFSVCFSNKTLFSLLYFFSF). 2 residues coordinate Mg(2+): aspartate 52 and aspartate 55. A CDP-1,2-diacyl-sn-glycerol contacts are provided by glycine 56, arginine 60, and serine 66. Aspartate 73 and aspartate 77 together coordinate Mg(2+). Aspartate 77 functions as the Proton acceptor in the catalytic mechanism. Helical transmembrane passes span 84–104 (LLVILSQIYRPSLVFLSLLAL), 143–163 (MFMGYCCVSCEVLYIILLLIA), and 184–204 (LSLLLALSIFGWSIKQIINVI).

It belongs to the CDP-alcohol phosphatidyltransferase class-I family. Requires Mg(2+) as cofactor. It depends on Mn(2+) as a cofactor.

The protein resides in the membrane. It catalyses the reaction a CDP-1,2-diacyl-sn-glycerol + myo-inositol = a 1,2-diacyl-sn-glycero-3-phospho-(1D-myo-inositol) + CMP + H(+). Functionally, catalyzes the biosynthesis of phosphatidylinositol (PtdIns) as well as PtdIns:inositol exchange reaction. May thus act to reduce an excessive cellular PtdIns content. The exchange activity is due to the reverse reaction of PtdIns synthase and is dependent on CMP, which is tightly bound to the enzyme. The protein is Probable CDP-diacylglycerol--inositol 3-phosphatidyltransferase 2 (PIS2) of Arabidopsis thaliana (Mouse-ear cress).